We begin with the raw amino-acid sequence, 355 residues long: Ataxin-3 (355 aa).

A Peptide (Met-Gly) (interchain with G-Cter in ubiquitin) cross-link involves residue methionine 1. The Josephin domain occupies 1–180; the sequence is MESIFHEKQE…DCEADQLLQM (180 aa). The active-site Nucleophile is the cysteine 14. Catalysis depends on histidine 119, which acts as the Proton acceptor. Residue asparagine 134 is part of the active site. A Glycyl lysine isopeptide (Lys-Gly) (interchain with G-Cter in ubiquitin) cross-link involves residue lysine 200. Serine 219 is modified (phosphoserine). UIM domains lie at 224–243 and 244–263; these read EDED…IDME and DEEA…SSRS. Residues 257–275 show a composition bias toward polar residues; it reads MQGSSRSMCENSPQTSSPD. Residues 257–355 form a disordered region; it reads MQGSSRSMCE…KDNLKAERKK (99 aa). Phosphoserine occurs at positions 268, 272, and 273. Basic and acidic residues predominate over residues 279–289; it reads EELRRRREAYF. Serine 321 bears the Phosphoserine mark. In terms of domain architecture, UIM 3 spans 329 to 348; sequence SEEDMLRAAVTMSLETAKDN. Over residues 344–355 the composition is skewed to basic and acidic residues; that stretch reads TAKDNLKAERKK.

As to quaternary structure, interacts with STUB1/CHIP (when monoubiquitinated). Interacts with DNA repair proteins RAD23A and RAD23B. Interacts with BECN1 (via its poly-Gln domain). Interacts with PRKN, UBR2, VCP and tubulin. Monoubiquitinated by UBE2W, possibly leading to activate the deubiquitinating enzyme activity.

The protein resides in the nucleus matrix. It is found in the nucleus. Its subcellular location is the lysosome membrane. It carries out the reaction Thiol-dependent hydrolysis of ester, thioester, amide, peptide and isopeptide bonds formed by the C-terminal Gly of ubiquitin (a 76-residue protein attached to proteins as an intracellular targeting signal).. In terms of biological role, deubiquitinating enzyme involved in protein homeostasis maintenance, transcription, cytoskeleton regulation, myogenesis and degradation of misfolded chaperone substrates. Binds long polyubiquitin chains and trims them, while it has weak or no activity against chains of 4 or less ubiquitins. Involved in degradation of misfolded chaperone substrates via its interaction with STUB1/CHIP: recruited to monoubiquitinated STUB1/CHIP, and restricts the length of ubiquitin chain attached to STUB1/CHIP substrates and preventing further chain extension. Interacts with key regulators of transcription and represses transcription: acts as a histone-binding protein that regulates transcription. Acts as a negative regulator of mTORC1 signaling in response to amino acid deprivation by mediating deubiquitination of RHEB, thereby promoting RHEB inactivation by the TSC-TBC complex. Regulates autophagy via the deubiquitination of 'Lys-402' of BECN1 leading to the stabilization of BECN1. This chain is Ataxin-3 (Atxn3), found in Mus musculus (Mouse).